The primary structure comprises 338 residues: Fructose-1,6-bisphosphatase 1 (338 aa).

Alanine 2 is modified (N-acetylalanine). AMP contacts are provided by residues 18 to 22 (VMEEG) and 28 to 32 (TGELT). Mg(2+) is bound by residues aspartate 69 and glutamate 98. Position 113–114 (113–114 (KY)) interacts with AMP. Positions 119, 121, and 122 each coordinate Mg(2+). 122 to 125 (DGSS) contributes to the substrate binding site. Arginine 141 is an AMP binding site. Lysine 151 bears the N6-succinyllysine mark. Residues 213–216 (NEGY), 244–249 (RYVGSM), tyrosine 265, and 275–277 (KLR) each bind substrate. Tyrosine 216, tyrosine 245, and tyrosine 265 each carry phosphotyrosine. Glutamate 281 provides a ligand contact to Mg(2+).

It belongs to the FBPase class 1 family. Homotetramer. It depends on Mg(2+) as a cofactor. In terms of tissue distribution, expressed in pancreatic islets.

It catalyses the reaction beta-D-fructose 1,6-bisphosphate + H2O = beta-D-fructose 6-phosphate + phosphate. It participates in carbohydrate biosynthesis; gluconeogenesis. Subject to complex allosteric regulation. The enzyme can assume an active R-state, or an inactive T-state. Intermediate conformations may exist. AMP acts as an allosteric inhibitor. AMP binding affects the turnover of bound substrate and not the affinity for substrate. Fructose 2,6-bisphosphate acts as a competitive inhibitor. Fructose 2,6-bisphosphate and AMP have synergistic effects. Its function is as follows. Catalyzes the hydrolysis of fructose 1,6-bisphosphate to fructose 6-phosphate in the presence of divalent cations, acting as a rate-limiting enzyme in gluconeogenesis. Plays a role in regulating glucose sensing and insulin secretion of pancreatic beta-cells. Appears to modulate glycerol gluconeogenesis in liver. Important regulator of appetite and adiposity; increased expression of the protein in liver after nutrient excess increases circulating satiety hormones and reduces appetite-stimulating neuropeptides and thus seems to provide a feedback mechanism to limit weight gain. This chain is Fructose-1,6-bisphosphatase 1 (FBP1), found in Homo sapiens (Human).